Here is a 503-residue protein sequence, read N- to C-terminus: ATP synthase subunit alpha (503 aa).

ATP is bound at residue 170-177; sequence GDRQTGKT.

It belongs to the ATPase alpha/beta chains family. In terms of assembly, F-type ATPases have 2 components, CF(1) - the catalytic core - and CF(0) - the membrane proton channel. CF(1) has five subunits: alpha(3), beta(3), gamma(1), delta(1), epsilon(1). CF(0) has three main subunits: a(1), b(2) and c(9-12). The alpha and beta chains form an alternating ring which encloses part of the gamma chain. CF(1) is attached to CF(0) by a central stalk formed by the gamma and epsilon chains, while a peripheral stalk is formed by the delta and b chains.

It localises to the cell inner membrane. It carries out the reaction ATP + H2O + 4 H(+)(in) = ADP + phosphate + 5 H(+)(out). Its function is as follows. Produces ATP from ADP in the presence of a proton gradient across the membrane. The alpha chain is a regulatory subunit. This chain is ATP synthase subunit alpha, found in Geobacter sulfurreducens (strain ATCC 51573 / DSM 12127 / PCA).